The following is a 331-amino-acid chain: Cytosolic Fe-S cluster assembly factor CFD1 (331 aa).

25–32 (GKGGVGKS) is an ATP binding site. Positions 211 and 214 each coordinate [4Fe-4S] cluster.

The protein belongs to the Mrp/NBP35 ATP-binding proteins family. NUBP2/CFD1 subfamily. In terms of assembly, heterotetramer of 2 NBP35 and 2 CFD1 chains. The cofactor is [4Fe-4S] cluster.

Its subcellular location is the cytoplasm. Component of the cytosolic iron-sulfur (Fe/S) protein assembly (CIA) machinery. Required for maturation of extramitochondrial Fe-S proteins. The NBP35-CFD1 heterotetramer forms a Fe-S scaffold complex, mediating the de novo assembly of an Fe-S cluster and its transfer to target apoproteins. In Cryptococcus neoformans var. neoformans serotype D (strain B-3501A) (Filobasidiella neoformans), this protein is Cytosolic Fe-S cluster assembly factor CFD1.